The following is a 336-amino-acid chain: Calcium uniporter protein 3, mitochondrial (336 aa).

The N-terminal 69 residues, 1–69 (MAMRKLLSKK…RFMHNSAMIR (69 aa)), are a transit peptide targeting the mitochondrion. 2 consecutive transmembrane segments (helical) span residues 231–251 (LWAG…LTFW) and 257–277 (VMEP…YAFF). The Selectivity filter signature appears at 255 to 263 (WDVMEPICF). Glutamate 259 contributes to the Ca(2+) binding site.

This sequence belongs to the MCU (TC 1.A.77) family.

The protein resides in the mitochondrion inner membrane. It catalyses the reaction Ca(2+)(in) = Ca(2+)(out). Its function is as follows. Mitochondrial inner membrane calcium uniporter that mediates calcium uptake into mitochondria. Constitutes a pore-forming and calcium-conducting subunit. Mitochondrial calcium homeostasis plays key roles in cellular physiology and regulates cell bioenergetics, cytoplasmic calcium signals and activation of cell death pathways. The chain is Calcium uniporter protein 3, mitochondrial from Arabidopsis thaliana (Mouse-ear cress).